The primary structure comprises 164 residues: Putative L,D-transpeptidase YkuD (164 aa).

The LysM domain occupies 2–45 (LTYQVKQGDTLNSIAADFRISTAALLQANPSLQAGLTAGQSIVI). In terms of domain architecture, L,D-TPase catalytic spans 56-163 (YHIAVSIGAK…VPNGTRVTIN (108 aa)). His123 (proton donor/acceptor) is an active-site residue. Cys139 acts as the Nucleophile in catalysis.

This sequence belongs to the YkuD family. In terms of assembly, monomer.

It localises to the spore wall. It functions in the pathway cell wall biogenesis; peptidoglycan biosynthesis. Functionally, probable enzyme that may play an important role in cell wall biology. The sequence is that of Putative L,D-transpeptidase YkuD (ykuD) from Bacillus subtilis (strain 168).